Reading from the N-terminus, the 299-residue chain is Regucalcin (299 aa).

E18 contributes to the a divalent metal cation binding site. Substrate contacts are provided by R101, N103, and E121. N6-succinyllysine is present on K144. The a divalent metal cation site is built by N154 and D204. Residue D204 is the Proton donor/acceptor of the active site. An N6-succinyllysine mark is found at K244 and K253.

This sequence belongs to the SMP-30/CGR1 family. Monomer. Zn(2+) is required as a cofactor. Mn(2+) serves as cofactor. The cofactor is Ca(2+). Requires Mg(2+) as cofactor.

The protein resides in the cytoplasm. The catalysed reaction is D-glucono-1,5-lactone + H2O = D-gluconate + H(+). The protein operates within cofactor biosynthesis; L-ascorbate biosynthesis via UDP-alpha-D-glucuronate pathway; L-ascorbate from UDP-alpha-D-glucuronate: step 3/4. Functionally, gluconolactonase with low activity towards other sugar lactones, including gulonolactone and galactonolactone. Catalyzes a key step in ascorbic acid (vitamin C) biosynthesis. Can also hydrolyze diisopropyl phosphorofluoridate and phenylacetate (in vitro). Calcium-binding protein. Modulates Ca(2+) signaling, and Ca(2+)-dependent cellular processes and enzyme activities. The sequence is that of Regucalcin (RGN) from Oryctolagus cuniculus (Rabbit).